Reading from the N-terminus, the 172-residue chain is 3-hydroxydecanoyl-[acyl-carrier-protein] dehydratase (172 aa).

His-71 is a catalytic residue.

Belongs to the thioester dehydratase family. FabA subfamily. In terms of assembly, homodimer.

Its subcellular location is the cytoplasm. It carries out the reaction a (3R)-hydroxyacyl-[ACP] = a (2E)-enoyl-[ACP] + H2O. It catalyses the reaction (3R)-hydroxydecanoyl-[ACP] = (2E)-decenoyl-[ACP] + H2O. The catalysed reaction is (2E)-decenoyl-[ACP] = (3Z)-decenoyl-[ACP]. It participates in lipid metabolism; fatty acid biosynthesis. In terms of biological role, necessary for the introduction of cis unsaturation into fatty acids. Catalyzes the dehydration of (3R)-3-hydroxydecanoyl-ACP to E-(2)-decenoyl-ACP and then its isomerization to Z-(3)-decenoyl-ACP. Can catalyze the dehydratase reaction for beta-hydroxyacyl-ACPs with saturated chain lengths up to 16:0, being most active on intermediate chain length. This Yersinia enterocolitica serotype O:8 / biotype 1B (strain NCTC 13174 / 8081) protein is 3-hydroxydecanoyl-[acyl-carrier-protein] dehydratase.